Here is a 593-residue protein sequence, read N- to C-terminus: MSWLFGLNRGQPEPPGVPGFPEPPSPPGGSGDGGDKNRPKDKWSNFDPTGLERAAKAARELDQSRHAKEALNLAKVQEETLQMEQQAKIKEYEAAVEQIKNEQIRVQSEEKRKTLNEETKQHQARAQYQDKLARQRYEDQLRQQQLQNEENLRRQEESVQKQEAMRKATVEHEMELRHKNDMLRIEAEAHARAKVERENADIIREQIRLKAAEHRQTVLESIKTAGTVFGEGFRTFISDWDKVTATVAGLTLLAVGVYTAKNGTGVAGRYIEARLGKPSLVRDTSRITVVEAIKHPIKISKRIFSKIQDALEGVILSPRLEERVRDIAIATRNTKANKGLYRNILMYGPPGTGKTLFAKKLAMHSSMDYAIMTGGDVAPMGREGVTAMHKVFDWAGTSKRGLLLFVDEADAFLRKRSTEKISEDLRATLNAFLYRTGEQSNKFMLVLASNQPEQFDWAINDRIDEIVHFDLPGLEERERLVRLYFDKYVLQPASEGKQRLKVAQFDYGKKCSELATLTEGMSGREISKLGVAWQAAAYASEDGILTEAMIDARVADAIRQHQQKMEWLKAEGKESTKEIGKNPLQPLLEGTPV.

Disordered regions lie at residues 1–64 (MSWL…LDQS), 109–129 (EEKR…AQYQ), and 145–164 (QLQN…KQEA). The Mitochondrial intermembrane portion of the chain corresponds to 1 to 242 (MSWLFGLNRG…FRTFISDWDK (242 aa)). The span at 12–27 (PEPPGVPGFPEPPSPP) shows a compositional bias: pro residues. 4 stretches are compositionally biased toward basic and acidic residues: residues 33-44 (GGDKNRPKDKWS), 53-64 (RAAKAARELDQS), 109-121 (EEKR…ETKQ), and 150-164 (ENLR…KQEA). Residues 51 to 215 (LERAAKAARE…QIRLKAAEHR (165 aa)) are a coiled coil. A helical transmembrane segment spans residues 243–260 (VTATVAGLTLLAVGVYTA). Topologically, residues 261 to 593 (KNGTGVAGRY…LQPLLEGTPV (333 aa)) are mitochondrial matrix. 348 to 355 (GPPGTGKT) provides a ligand contact to ATP. Positions 570–580 (AEGKESTKEIG) are enriched in basic and acidic residues. Positions 570–593 (AEGKESTKEIGKNPLQPLLEGTPV) are disordered.

Belongs to the AAA ATPase family. Can form homooligomers. Homodimer formation at the N-terminus may be regulated by ATP and is required for the interaction with the inner surface of the mitochondrial outer membrane and correct mitochondrial homeostasis.

The protein localises to the mitochondrion inner membrane. It is found in the mitochondrion matrix. Its subcellular location is the mitochondrion nucleoid. It catalyses the reaction ATP + H2O = ADP + phosphate + H(+). Functionally, essential for mitochondrial network organization, mitochondrial metabolism and cell growth at organism and cellular level. May play an important role in mitochondrial protein synthesis. May also participate in mitochondrial DNA replication. May bind to mitochondrial DNA D-loops and contribute to nucleoid stability. Required for enhanced channeling of cholesterol for hormone-dependent steroidogenesis. Involved in mitochondrial-mediated antiviral innate immunity. Required to protect mitochondria from the PERK-mediated unfolded protein response: specifically inhibits the activity of EIF2AK3/PERK at mitochondria-endoplasmic reticulum contact sites, thereby providing a safe haven for mitochondrial protein translation during endoplasmic reticulum stress. Ability to inhibit EIF2AK3/PERK is independent of its ATPase activity. Also involved in the mitochondrial DNA damage response by promoting signaling between damaged genomes and the mitochondrial membrane, leading to activation of the integrated stress response (ISR). This Xenopus laevis (African clawed frog) protein is ATPase family AAA domain-containing protein 3-B (atad3-b).